The primary structure comprises 750 residues: MSDRYELFLTCPKGLEGLLAEEATALGLQETREHTSAIRGSADMETAYRLCLWSRLANRVLLVLKRFPMKDAEDLYHGVLDVEWHDHLEPEGTIAVEFSGHGSGIDNTHFGALKVKDAIVDKLRTPEGERPSVDKINPDLRVHLRLDRGEAILSLDLSGHSLHQRGYRLQQGAAPLKENLAAAILIRAGWPRIAAEGGALADPMCGVGTFLVEAGMIAADIAPNIKRERWGFSAWLGHVPTLWRKLHDEALARAEAGLAKTPSWIRGYEADPRLIQPGRNNIERAGLSDWIKVYQGEVATFEPRPDQNQKGLVICNPPYGERLGDEASLLYLYQNLGERLRQACLNWEAAVFTGAPDLGKRMGIRSHKQYSFWNGALPCKLLLIKVTPDQFVTGERRTPEQRQVERENPVEVEVVERKLNKNGNPIKPEPVVVEQARLSEGGQMFANRLQKNLKLLGKWVRREGIDCYRVYDADMPEYSLAIDLYHDWVHVQEYAAPKSIDPEKASARLFDALAAIPQALNIDKSRVVIKRRERQSGTKQYERQSAQGQFLEVSEGGVKLLVNLTDYLDTGLFLDHRPMRMRIQREAAGKRFLNLYAYTATASVHAAKGGARSTTSVDLSRTYLDWARRNLSLNGFSDKNRLEQGDVMAWLQANRDEYDLIFIDPPTFSNSKRMEGIFDVQRDQVELIDLAMARLAPGGVLYFSNNFRKFVLDENLGQRYAVEDITAQTIDPDFARNGKIHRAWKITARA.

One can recognise a THUMP domain in the interval 46–157 (TAYRLCLWSR…RGEAILSLDL (112 aa)).

It belongs to the methyltransferase superfamily. RlmKL family.

The protein resides in the cytoplasm. The enzyme catalyses guanosine(2445) in 23S rRNA + S-adenosyl-L-methionine = N(2)-methylguanosine(2445) in 23S rRNA + S-adenosyl-L-homocysteine + H(+). The catalysed reaction is guanosine(2069) in 23S rRNA + S-adenosyl-L-methionine = N(2)-methylguanosine(2069) in 23S rRNA + S-adenosyl-L-homocysteine + H(+). Specifically methylates the guanine in position 2445 (m2G2445) and the guanine in position 2069 (m7G2069) of 23S rRNA. This chain is Ribosomal RNA large subunit methyltransferase K/L, found in Pseudomonas syringae pv. tomato (strain ATCC BAA-871 / DC3000).